The sequence spans 96 residues: uncharacterized protein (96 aa).

The [3Fe-4S] cluster site is built by Cys10, Cys16, and Cys55. The segment at 67-96 (AGDGERASADPAPSPAEAERHAAKDQHNLG) is disordered. The segment covering 83–96 (EAERHAAKDQHNLG) has biased composition (basic and acidic residues).

It depends on [3Fe-4S] cluster as a cofactor.

Electron transport protein for the cytochrome systems. This is an uncharacterized protein from Bradyrhizobium diazoefficiens (strain JCM 10833 / BCRC 13528 / IAM 13628 / NBRC 14792 / USDA 110).